Reading from the N-terminus, the 117-residue chain is Large ribosomal subunit protein eL34 (117 aa).

At serine 12 the chain carries Phosphoserine. An N6-acetyllysine mark is found at lysine 36 and lysine 43. Lysine 108 is covalently cross-linked (Glycyl lysine isopeptide (Lys-Gly) (interchain with G-Cter in SUMO2)).

It belongs to the eukaryotic ribosomal protein eL34 family. In terms of assembly, component of the large ribosomal subunit.

The protein localises to the cytoplasm. It is found in the cytosol. It localises to the endoplasmic reticulum. Its function is as follows. Component of the large ribosomal subunit. The ribosome is a large ribonucleoprotein complex responsible for the synthesis of proteins in the cell. The polypeptide is Large ribosomal subunit protein eL34 (Rpl34) (Rattus norvegicus (Rat)).